Consider the following 396-residue polypeptide: DNA polymerase IV (396 aa).

A UmuC domain is found at 2-182 (ILHVDMDAFY…LPVSRLWGVG (181 aa)). 2 residues coordinate Mg(2+): Asp-6 and Asp-100. Glu-101 is a catalytic residue.

This sequence belongs to the DNA polymerase type-Y family. Monomer. Requires Mg(2+) as cofactor.

The protein resides in the cytoplasm. The enzyme catalyses DNA(n) + a 2'-deoxyribonucleoside 5'-triphosphate = DNA(n+1) + diphosphate. In terms of biological role, poorly processive, error-prone DNA polymerase involved in untargeted mutagenesis. Copies undamaged DNA at stalled replication forks, which arise in vivo from mismatched or misaligned primer ends. These misaligned primers can be extended by PolIV. Exhibits no 3'-5' exonuclease (proofreading) activity. May be involved in translesional synthesis, in conjunction with the beta clamp from PolIII. The polypeptide is DNA polymerase IV (Rhodopirellula baltica (strain DSM 10527 / NCIMB 13988 / SH1)).